Reading from the N-terminus, the 943-residue chain is Isoleucine--tRNA ligase (943 aa).

A 'HIGH' region motif is present at residues 58–68 (PYANGSIHIGH). E567 contacts L-isoleucyl-5'-AMP. The 'KMSKS' region signature appears at 608-612 (KMSKS). An ATP-binding site is contributed by K611. The Zn(2+) site is built by C906, C909, C926, and C929.

The protein belongs to the class-I aminoacyl-tRNA synthetase family. IleS type 1 subfamily. As to quaternary structure, monomer. Zn(2+) is required as a cofactor.

The protein resides in the cytoplasm. The catalysed reaction is tRNA(Ile) + L-isoleucine + ATP = L-isoleucyl-tRNA(Ile) + AMP + diphosphate. In terms of biological role, catalyzes the attachment of isoleucine to tRNA(Ile). As IleRS can inadvertently accommodate and process structurally similar amino acids such as valine, to avoid such errors it has two additional distinct tRNA(Ile)-dependent editing activities. One activity is designated as 'pretransfer' editing and involves the hydrolysis of activated Val-AMP. The other activity is designated 'posttransfer' editing and involves deacylation of mischarged Val-tRNA(Ile). This is Isoleucine--tRNA ligase from Pseudomonas aeruginosa (strain UCBPP-PA14).